The following is a 369-amino-acid chain: Short chain dehydrogenase rstn4 (369 aa).

NADP(+)-binding residues include K88, D111, N138, Y234, and K238. Residue Y234 is the Proton donor of the active site. K238 (lowers pKa of active site Tyr) is an active-site residue.

It belongs to the short-chain dehydrogenases/reductases (SDR) family.

It participates in antifungal biosynthesis. In terms of biological role, short chain dehydrogenase; part of the gene cluster that mediates the biosynthesis of the tetrahydropyranyl antifungal agent restricticin that acts as an inhibitor of CYP51 and blocks the ergosterol biosynthesis. The highly reducing polyketide synthase rstn3, the short chain dehydrogenase rstn4, the cyclase rstn5, the FAD-dependent monooxygenase rstn6 and the enoylreductase rstn7 are required to generate the first stable intermediate desmethylrestrictinol. Rstn3 with rstn7 biosynthesize the first polyketide chain intermediate that is reduced by rstn4, followed by epoxidation by rstn6 before 6-endo cyclization via epoxide opening by rstn5 leads to desmethylrestrictinol. The methyltransferase rstn1 then catalyzes the C4 O-methylation of desmethylrestrictinol to produce restrictinol, and the nonribosomal peptide synthetase rstn8 catalyzes the C3 esterification of restrictinol with glycine that leads to restricticin. The polypeptide is Short chain dehydrogenase rstn4 (Aspergillus nomiae NRRL (strain ATCC 15546 / NRRL 13137 / CBS 260.88 / M93)).